A 782-amino-acid chain; its full sequence is Homeotic protein proboscipedia (782 aa).

Disordered regions lie at residues 1-23 (MQEV…ESPL), 153-195 (PQTP…VPEN), 251-336 (MKHK…GISS), 358-380 (SSVS…KDDG), 439-493 (IATP…QQQP), and 547-586 (YYNY…ADFE). Residues 164 to 169 (EYPWMK) carry the Antp-type hexapeptide motif. Residues 198–257 (PRRLRTAYTNTQLLELEKEFHFNKYLCRPRRIEIAASLDLTERQVKVWFQNRRMKHKRQT) constitute a DNA-binding region (homeobox). A compositionally biased stretch (low complexity) spans 308-321 (NNNTPSATNNNPSA). Positions 322–336 (GNLTPNSSLETGISS) are enriched in polar residues. The segment covering 452-463 (NGSGGGPAGGYF) has biased composition (gly residues). A compositionally biased stretch (low complexity) spans 464-493 (PGYYPSPKQQQQVQQQQLHPQQQQLPQQQP). A compositionally biased stretch (basic residues) spans 563 to 580 (QQHHHHAQHHQQQQHHQN).

It belongs to the Antp homeobox family. Proboscipedia subfamily.

It localises to the nucleus. Its function is as follows. Sequence-specific transcription factor which is part of a developmental regulatory system that provides cells with specific positional identities on the anterior-posterior axis. Controls development of mouthparts, and labial and maxillary palps. In Drosophila melanogaster (Fruit fly), this protein is Homeotic protein proboscipedia (pb).